Reading from the N-terminus, the 131-residue chain is MNPAIYLSCLVVFSLLLLGKVNAEDDDEFRTEKQRLLRVYGDSSVDEATRYRNVDDLVKFYDKYSTLLPWKPDLTQRAQDLLRRYKEETARAVLVDGAPAQGGFWLPLVKLLIVQLGVEIASEGFKRAIES.

The first 23 residues, 1-23 (MNPAIYLSCLVVFSLLLLGKVNA), serve as a signal peptide directing secretion.

The protein belongs to the Turandot family.

It is found in the secreted. A humoral factor that may play a role in stress tolerance. Requires Mekk1 expression in the fat body to regulate response to septic injury and consequent immune response. This chain is Protein Turandot M, found in Drosophila erecta (Fruit fly).